The sequence spans 256 residues: MAKIITFDDIDIEFKKLYEELSKQESYTTGVVYEVFNIFTLKSYIGKAHSYVKNGNQPVRRQGAKGRFYKHWKSCHNGENDCPIFYEALRNSDPQEWAVIILKVCSLKHLKEWETKMIERLDTSNPDKGYNYFVGDNKPNNPEYLVKYQSAKATSNAERAVSGALKKKAHNKDLPANINYRKKINKNGSIGEGYFVQIKIDGHLYNKAFLSGTMSMEAKLEAAKKTLEKFKQEAASKRAKRTKPSGSKTTRSTGRK.

A coiled-coil region spans residues 213 to 243 (TMSMEAKLEAAKKTLEKFKQEAASKRAKRTK). The interval 231 to 256 (KQEAASKRAKRTKPSGSKTTRSTGRK) is disordered. A compositionally biased stretch (polar residues) spans 244 to 256 (PSGSKTTRSTGRK).

This is an uncharacterized protein from Acanthamoeba polyphaga (Amoeba).